Consider the following 353-residue polypeptide: Photosystem II protein D1 (353 aa).

Residue T2 is modified to N-acetylthreonine. Position 2 is a phosphothreonine (T2). 3 helical membrane passes run 29-46 (YIGW…TATS), 118-133 (HFLL…EWEL), and 142-156 (WIAV…AATA). H118 serves as a coordination point for chlorophyll a. A pheophytin a-binding site is contributed by Y126. D170 and E189 together coordinate [CaMn4O5] cluster. Residues 197-218 (FHMLGVAGVFGGSLFSAMHGSL) form a helical membrane-spanning segment. H198 lines the chlorophyll a pocket. A quinone is bound by residues H215 and 264-265 (SF). Position 215 (H215) interacts with Fe cation. H272 contacts Fe cation. A helical transmembrane segment spans residues 274–288 (FLAAWPVVGIWFTAL). Residues H332, E333, D342, and A344 each contribute to the [CaMn4O5] cluster site. A propeptide spanning residues 345-353 (SVEAPSTNG) is cleaved from the precursor.

This sequence belongs to the reaction center PufL/M/PsbA/D family. In terms of assembly, PSII is composed of 1 copy each of membrane proteins PsbA, PsbB, PsbC, PsbD, PsbE, PsbF, PsbH, PsbI, PsbJ, PsbK, PsbL, PsbM, PsbT, PsbX, PsbY, PsbZ, Psb30/Ycf12, at least 3 peripheral proteins of the oxygen-evolving complex and a large number of cofactors. It forms dimeric complexes. The D1/D2 heterodimer binds P680, chlorophylls that are the primary electron donor of PSII, and subsequent electron acceptors. It shares a non-heme iron and each subunit binds pheophytin, quinone, additional chlorophylls, carotenoids and lipids. D1 provides most of the ligands for the Mn4-Ca-O5 cluster of the oxygen-evolving complex (OEC). There is also a Cl(-1) ion associated with D1 and D2, which is required for oxygen evolution. The PSII complex binds additional chlorophylls, carotenoids and specific lipids. is required as a cofactor. Tyr-161 forms a radical intermediate that is referred to as redox-active TyrZ, YZ or Y-Z. Post-translationally, C-terminally processed by CTPA; processing is essential to allow assembly of the oxygen-evolving complex and thus photosynthetic growth.

It localises to the plastid. It is found in the chloroplast thylakoid membrane. It catalyses the reaction 2 a plastoquinone + 4 hnu + 2 H2O = 2 a plastoquinol + O2. Functionally, photosystem II (PSII) is a light-driven water:plastoquinone oxidoreductase that uses light energy to abstract electrons from H(2)O, generating O(2) and a proton gradient subsequently used for ATP formation. It consists of a core antenna complex that captures photons, and an electron transfer chain that converts photonic excitation into a charge separation. The D1/D2 (PsbA/PsbD) reaction center heterodimer binds P680, the primary electron donor of PSII as well as several subsequent electron acceptors. This chain is Photosystem II protein D1, found in Acorus calamus (Sweet flag).